The sequence spans 291 residues: 4-hydroxy-tetrahydrodipicolinate synthase (291 aa).

Residue Thr-42 participates in pyruvate binding. Residue Tyr-129 is the Proton donor/acceptor of the active site. Lys-157 acts as the Schiff-base intermediate with substrate in catalysis. Residue Ile-198 coordinates pyruvate.

Belongs to the DapA family. In terms of assembly, homotetramer; dimer of dimers.

The protein resides in the cytoplasm. The enzyme catalyses L-aspartate 4-semialdehyde + pyruvate = (2S,4S)-4-hydroxy-2,3,4,5-tetrahydrodipicolinate + H2O + H(+). Its pathway is amino-acid biosynthesis; L-lysine biosynthesis via DAP pathway; (S)-tetrahydrodipicolinate from L-aspartate: step 3/4. Its function is as follows. Catalyzes the condensation of (S)-aspartate-beta-semialdehyde [(S)-ASA] and pyruvate to 4-hydroxy-tetrahydrodipicolinate (HTPA). This chain is 4-hydroxy-tetrahydrodipicolinate synthase, found in Chlamydia pneumoniae (Chlamydophila pneumoniae).